A 223-amino-acid chain; its full sequence is Peptidyl-prolyl cis-trans isomerase FKBP16-3, chloroplastic (223 aa).

A chloroplast-targeting transit peptide spans 1-36 (MAASSPSLLLPLGSASRNGLTTKNPNSSRYIAARVI). Residues 37–76 (ASETREQSCKISNLSSRREAMLLVLGVSGGLSMSSLAAYA) constitute a thylakoid transit peptide. Residues 124 to 216 (GFQVAANYVA…IFDVSLEFIP (93 aa)) enclose the PPIase FKBP-type domain.

Belongs to the FKBP-type PPIase family.

The protein localises to the plastid. It localises to the chloroplast thylakoid lumen. It carries out the reaction [protein]-peptidylproline (omega=180) = [protein]-peptidylproline (omega=0). Its function is as follows. PPIases accelerate the folding of proteins. It catalyzes the cis-trans isomerization of proline imidic peptide bonds in oligopeptides. The polypeptide is Peptidyl-prolyl cis-trans isomerase FKBP16-3, chloroplastic (FKBP16-3) (Arabidopsis thaliana (Mouse-ear cress)).